The following is a 120-amino-acid chain: Large ribosomal subunit protein bL20 (120 aa).

This sequence belongs to the bacterial ribosomal protein bL20 family.

Its function is as follows. Binds directly to 23S ribosomal RNA and is necessary for the in vitro assembly process of the 50S ribosomal subunit. It is not involved in the protein synthesizing functions of that subunit. This is Large ribosomal subunit protein bL20 from Pseudoalteromonas translucida (strain TAC 125).